The following is a 1252-amino-acid chain: Protein ITPRID2 (1252 aa).

Residues 28–70 (CRSSWQASETEDLSTETTTQDEDEDDEEDLPGTKLPAPAGRGN) are disordered. The segment covering 36–57 (ETEDLSTETTTQDEDEDDEEDL) has biased composition (acidic residues). Thr-85 carries the post-translational modification Phosphothreonine. Phosphoserine is present on residues Ser-90, Ser-109, Ser-207, Ser-268, and Ser-328. Disordered stretches follow at residues 306 to 483 (DKTE…HVPA), 552 to 575 (HVTPTAQDQPYFNESEEESLAPLQ), and 595 to 636 (FPQC…GELP). Over residues 357–372 (TVTEEVSGSSSTVTDS) the composition is skewed to low complexity. Composition is skewed to basic and acidic residues over residues 395–407 (SREAHSQEKDPLR) and 415–428 (DLGHDGRVSSHCEL). Residues 429–441 (ESSSELKSAQASS) show a composition bias toward low complexity. Phosphoserine is present on Ser-465. 7 positions are modified to phosphoserine: Ser-643, Ser-667, Ser-736, Ser-738, Ser-745, Ser-758, and Ser-766. A Glycyl lysine isopeptide (Lys-Gly) (interchain with G-Cter in SUMO2) cross-link involves residue Lys-807. 2 positions are modified to phosphoserine: Ser-866 and Ser-898. Residues 955–1031 (QELQVVRRSL…LLGLDEQLRA (77 aa)) are a coiled coil. 5 positions are modified to phosphoserine: Ser-1036, Ser-1051, Ser-1056, Ser-1059, and Ser-1114. Disordered stretches follow at residues 1095-1131 (GESSESVFSQATSESSSVCSSPSHTNRRSRGLPGSKP) and 1147-1180 (ALTPTAPSRTGSVQTPPDLESSEEAGGAEEASPV). Low complexity predominate over residues 1103 to 1117 (SQATSESSSVCSSPS). Thr-1149 is subject to Phosphothreonine. A compositionally biased stretch (polar residues) spans 1151–1161 (TAPSRTGSVQT). Ser-1154 is subject to Phosphoserine. Thr-1161 carries the phosphothreonine modification.

It is found in the cytoplasm. In Mus musculus (Mouse), this protein is Protein ITPRID2 (Itprid2).